The chain runs to 630 residues: Plastin-3 (630 aa).

EF-hand domains follow at residues 12–47 (DELDELKEAFAKVDLNSNGFICDYELHELFKEANMP) and 52–87 (KVREIIQKLMLDGDRNKDGKISFNEFVYIFQEVKSS). Ca(2+) is bound by residues aspartate 25, asparagine 27, asparagine 29, glutamate 36, aspartate 65, asparagine 67, aspartate 69, lysine 71, and glutamate 76. Actin-binding regions lie at residues 109–382 (TSEL…ALTK) and 383–627 (PENQ…GRGM). 2 consecutive Calponin-homology (CH) domains span residues 123–239 (EEEK…KIGL) and 267–378 (LSPE…NKYP). Residues serine 268, serine 293, serine 326, and serine 339 each carry the phosphoserine modification. A Phosphothreonine modification is found at threonine 391. 2 Calponin-homology (CH) domains span residues 397–506 (TREE…RRYT) and 518–627 (KATD…GRGM).

In terms of assembly, monomer.

The protein resides in the cytoplasm. In terms of biological role, actin-bundling protein. The sequence is that of Plastin-3 (Pls3) from Rattus norvegicus (Rat).